Consider the following 465-residue polypeptide: FAD-dependent monooxygenase olcE (465 aa).

Residues 9–29 (IIIGGSVAGLTLALSLNKIGI) form a helical membrane-spanning segment. FAD is bound by residues E35, G49, R108, D308, and A321.

The protein belongs to the paxM FAD-dependent monooxygenase family. The cofactor is FAD.

The protein resides in the membrane. It participates in secondary metabolite biosynthesis; terpenoid biosynthesis. FAD-dependent monooxygenase; part of the gene cluster that mediates the biosynthesis of 15-deoxyoxalicine B. The first step of the pathway is the synthesis of nicotinyl-CoA from nicotinic acid by the nicotinic acid-CoA ligase olcI. Nicotinyl-CoA is then a substrate of polyketide synthase olcA to produce 4-hydroxy-6-(3-pyridinyl)-2H-pyran-2-one (HPPO) which is further prenylated by the polyprenyl transferase olcH to yield geranylgeranyl-HPPO. Geranylgeranyl pyrophosphate is provided by the cluster-specific geranylgeranyl pyrophosphate synthase olcC. The FAD-dependent monooxygenase olcE catalyzes the epoxidation of geranylgeranyl-HPPO and the terpene cyclase olcD catalyzes the cyclization of the terpenoid component, resulting in the formation of the tricyclic terpene moiety seen in predecaturin E. The cytochrome P450 monooxygenase then catalyzes the allylic oxidation of predecaturin E, which is followed by spirocylization with concomitant loss of one molecule of water to form decaturin E. Decaturin E is the substrate of the cytochrome P450 monooxygenase olcJ which hydroxylates it at the C-29 position to form decaturin F. The short-chain dehydrogenase/reductase olcF may catalyze the oxidation of decaturin F to generate the 29-hydroxyl-27-one intermediate, and subsequent hemiacetal formation probably leads to the formation of decaturin C. The dioxygenase olcK may be a peroxisomal enzyme that catalyzes the hydroxylation of decaturin C into decaturin A once decaturin C is shuttled into the peroxisome by the MFS transporter olcL. Finally the cytochrome P450 monooxygenase olcB catalyzes the oxidative rearrangement to yield 15-deoxyoxalicine B. In the absence of olcJ, decaturin E may be shunted to a pathway in which it is oxidized to a ketone, possibly by olcF, to form decaturin D, which undergoes further allylic oxidation to yield decaturin G. Moreover, in the absence of oclK or oclL, oclB can convert decaturin C into 15-deoxyoxalicine A. The sequence is that of FAD-dependent monooxygenase olcE from Penicillium canescens.